A 240-amino-acid polypeptide reads, in one-letter code: RNA-free ribonuclease P (240 aa).

Belongs to the HARP family.

The enzyme catalyses Endonucleolytic cleavage of RNA, removing 5'-extranucleotides from tRNA precursor.. Its function is as follows. RNA-free RNase P that catalyzes the removal of the 5'-leader sequence from pre-tRNA to produce the mature 5'-terminus. In Methanococcus aeolicus (strain ATCC BAA-1280 / DSM 17508 / OCM 812 / Nankai-3), this protein is RNA-free ribonuclease P.